Here is a 310-residue protein sequence, read N- to C-terminus: UPF0324 membrane protein VP0936 (310 aa).

The next 10 membrane-spanning stretches (helical) occupy residues 7–29, 44–63, 75–94, 104–126, 133–155, 165–187, 199–218, 228–250, 257–279, and 289–308; these read PFGL…LVIG, IASF…GFGI, GIGL…SLIA, AYLI…APAI, IGLA…PVIG, FGTW…SAYG, LARA…IFSR, LVIP…FPQL, IFTI…ISIS, and LLFG…SWLV.

The protein belongs to the UPF0324 family.

The protein localises to the cell membrane. This Vibrio parahaemolyticus serotype O3:K6 (strain RIMD 2210633) protein is UPF0324 membrane protein VP0936.